The primary structure comprises 436 residues: ATP-dependent protease ATPase subunit HslU (436 aa).

ATP-binding positions include V18, G60–E65, D249, E314, and R386.

Belongs to the ClpX chaperone family. HslU subfamily. As to quaternary structure, a double ring-shaped homohexamer of HslV is capped on each side by a ring-shaped HslU homohexamer. The assembly of the HslU/HslV complex is dependent on binding of ATP.

The protein localises to the cytoplasm. Functionally, ATPase subunit of a proteasome-like degradation complex; this subunit has chaperone activity. The binding of ATP and its subsequent hydrolysis by HslU are essential for unfolding of protein substrates subsequently hydrolyzed by HslV. HslU recognizes the N-terminal part of its protein substrates and unfolds these before they are guided to HslV for hydrolysis. The polypeptide is ATP-dependent protease ATPase subunit HslU (Rhizobium rhizogenes (strain K84 / ATCC BAA-868) (Agrobacterium radiobacter)).